Consider the following 461-residue polypeptide: D-arabinono-1,4-lactone oxidase (461 aa).

The FAD-binding PCMH-type domain occupies 24-194 (FSAISLGLRC…VDITISVVPA (171 aa)). H61 is subject to Pros-8alpha-FAD histidine.

It belongs to the oxygen-dependent FAD-linked oxidoreductase family. FAD is required as a cofactor.

Its subcellular location is the mitochondrion membrane. The enzyme catalyses D-arabinono-1,4-lactone + O2 = dehydro-D-arabinono-1,4-lactone + H2O2 + H(+). It participates in cofactor biosynthesis; D-erythroascorbate biosynthesis; dehydro-D-arabinono-1,4-lactone from D-arabinose: step 2/2. The polypeptide is D-arabinono-1,4-lactone oxidase (alo1) (Schizosaccharomyces pombe (strain 972 / ATCC 24843) (Fission yeast)).